We begin with the raw amino-acid sequence, 477 residues long: MIRRLQDSGDLVRAFPRVHFVGIGGTGMSGIAEVMLTLGYEVSGSDNSDNVATRRLAKLGARVMRGHSAANVLGTDCVVVSSAIRDDNPELMEARSQRIPIMPRAAMLAELMRFRRGIAVAGTHGKTTTTSLAAAVLSEGGLDPTFVIGGQLLAAGANAKLGGGQWLVAEADESDGSFLRLNPLMAVITNIDADHLENYGNDFARIQAAFAEFLQRLPFYGLSLLCIDDPEVAALAGRTPRHVMSYGMSENADVRAEDVVQDGPRMRFTLRLPEGTTTPVTLALPGRHNVLNALAAAAIGWQLGVAPGTIARALENFAGIGRRFNDLGEVTTSTGARVRVVDDYGHHPRELEAVFAAARGGWPDKRLVVAFQPHRYSRTRDQFDAFAAVLSTVDALVLSEVYPAGEAPIPGADSRALARAIRARGRSEPVVVGQIASLAEVLPDVLQDGDLLLMMGAGDIGYVAQHIINNGFVGEPA.

122-128 (GTHGKTT) is an ATP binding site.

It belongs to the MurCDEF family.

It localises to the cytoplasm. It carries out the reaction UDP-N-acetyl-alpha-D-muramate + L-alanine + ATP = UDP-N-acetyl-alpha-D-muramoyl-L-alanine + ADP + phosphate + H(+). It participates in cell wall biogenesis; peptidoglycan biosynthesis. Its function is as follows. Cell wall formation. This chain is UDP-N-acetylmuramate--L-alanine ligase, found in Xanthomonas oryzae pv. oryzae (strain MAFF 311018).